The chain runs to 202 residues: Thymidylate kinase (202 aa).

7-14 (GIDGSGKT) is an ATP binding site.

It belongs to the thymidylate kinase family.

It catalyses the reaction dTMP + ATP = dTDP + ADP. Phosphorylation of dTMP to form dTDP in both de novo and salvage pathways of dTTP synthesis. This is Thymidylate kinase from Ehrlichia canis (strain Jake).